The primary structure comprises 154 residues: 6,7-dimethyl-8-ribityllumazine synthase (154 aa).

Residues phenylalanine 22, 56-58, and 80-82 contribute to the 5-amino-6-(D-ribitylamino)uracil site; these read AFE and AVI. (2S)-2-hydroxy-3-oxobutyl phosphate is bound at residue 85–86; sequence AT. Histidine 88 functions as the Proton donor in the catalytic mechanism. Phenylalanine 113 is a binding site for 5-amino-6-(D-ribitylamino)uracil. Arginine 127 contributes to the (2S)-2-hydroxy-3-oxobutyl phosphate binding site.

The protein belongs to the DMRL synthase family.

The enzyme catalyses (2S)-2-hydroxy-3-oxobutyl phosphate + 5-amino-6-(D-ribitylamino)uracil = 6,7-dimethyl-8-(1-D-ribityl)lumazine + phosphate + 2 H2O + H(+). It participates in cofactor biosynthesis; riboflavin biosynthesis; riboflavin from 2-hydroxy-3-oxobutyl phosphate and 5-amino-6-(D-ribitylamino)uracil: step 1/2. Functionally, catalyzes the formation of 6,7-dimethyl-8-ribityllumazine by condensation of 5-amino-6-(D-ribitylamino)uracil with 3,4-dihydroxy-2-butanone 4-phosphate. This is the penultimate step in the biosynthesis of riboflavin. This chain is 6,7-dimethyl-8-ribityllumazine synthase, found in Clostridium botulinum (strain Okra / Type B1).